A 31-amino-acid chain; its full sequence is Protamine-YI (31 aa).

Positions 1–31 are disordered; that stretch reads ARRRRSSSRPIRRRRPRRRTTRRRRAGRRRR.

Testis.

The protein resides in the nucleus. Its subcellular location is the chromosome. Its function is as follows. Protamines substitute for histones in the chromatin of sperm during the haploid phase of spermatogenesis. They compact sperm DNA into a highly condensed, stable and inactive complex. The protein is Protamine-YI of Clupea harengus (Atlantic herring).